The chain runs to 366 residues: Glutamate 5-kinase (366 aa).

Lysine 17 contacts ATP. Serine 57, aspartate 144, and asparagine 156 together coordinate substrate. Residues 176-177 (SD) and 216-222 (TGGMVSK) each bind ATP. The PUA domain maps to 278–356 (SGALTLDDGA…SDLPAEMRRP (79 aa)).

It belongs to the glutamate 5-kinase family.

The protein localises to the cytoplasm. It carries out the reaction L-glutamate + ATP = L-glutamyl 5-phosphate + ADP. It participates in amino-acid biosynthesis; L-proline biosynthesis; L-glutamate 5-semialdehyde from L-glutamate: step 1/2. Functionally, catalyzes the transfer of a phosphate group to glutamate to form L-glutamate 5-phosphate. The polypeptide is Glutamate 5-kinase (Mycolicibacterium vanbaalenii (strain DSM 7251 / JCM 13017 / BCRC 16820 / KCTC 9966 / NRRL B-24157 / PYR-1) (Mycobacterium vanbaalenii)).